A 550-amino-acid chain; its full sequence is Chaperonin GroEL (550 aa).

Residues 30–33 (TLGP), Lys51, 87–91 (DGTTT), Gly415, and Asp497 contribute to the ATP site.

It belongs to the chaperonin (HSP60) family. In terms of assembly, forms a cylinder of 14 subunits composed of two heptameric rings stacked back-to-back. Interacts with the co-chaperonin GroES.

The protein resides in the cytoplasm. The enzyme catalyses ATP + H2O + a folded polypeptide = ADP + phosphate + an unfolded polypeptide.. In terms of biological role, together with its co-chaperonin GroES, plays an essential role in assisting protein folding. The GroEL-GroES system forms a nano-cage that allows encapsulation of the non-native substrate proteins and provides a physical environment optimized to promote and accelerate protein folding. The polypeptide is Chaperonin GroEL (Yersinia enterocolitica serotype O:8 / biotype 1B (strain NCTC 13174 / 8081)).